Reading from the N-terminus, the 111-residue chain is Probable monothiol glutaredoxin 2 (111 aa).

Residues 7-109 form the Glutaredoxin domain; the sequence is LKFIQNAIKK…KMLKDETKLI (103 aa). Lysine 24 contacts glutathione. Cysteine 32 lines the [2Fe-2S] cluster pocket. Glutathione is bound by residues arginine 61, phenylalanine 73, and 86 to 87; that span reads CD.

The protein belongs to the glutaredoxin family. Monothiol subfamily.

In Rickettsia typhi (strain ATCC VR-144 / Wilmington), this protein is Probable monothiol glutaredoxin 2 (grxC2).